The chain runs to 563 residues: Cystathionine gamma-synthase-like protein ankD (563 aa).

Positions 1–37 (MGELGPASAQHGSDSISFSGSYTQPLGAPQPPNEPHA) are disordered. A compositionally biased stretch (polar residues) spans 10–24 (QHGSDSISFSGSYTQ).

This sequence belongs to the trans-sulfuration enzymes family. MET7 subfamily. The cofactor is pyridoxal 5'-phosphate.

The catalysed reaction is cyclo(L-arginyl-(Z)-dehydro-3,4-dihydroxytyrosyl) + O-acetyl-L-homoserine = cyclo(L-arginyl-(Z)-dehydro-4-O-homoseryl-tyrosyl) + acetate + H(+). It functions in the pathway secondary metabolite biosynthesis. Functionally, cystathionine gamma-synthase-like protein; part of the ank cluster that mediates the biosynthesis of NK13650 C, a highly modified cyclo-arginine-tyrosine dipeptide. AnkD catalyzes the attachment of L-homoserine moiety using O-acetyl-L-homoserine as co-substrate. Within the pathway, the cyclodipeptide synthase ankA acts as the scaffold-generating enzyme and is responsible for formation of the cyclo-Arg-Tyr diketopiperazine (cRY) from L-Arg and L-Tyr. The ankA product cRY is desaturated by the cytochrome P450 monooxygenase ankB to yield a dehydro-cyclodipeptide intermediate. The FAD-dependent monooxygenase ankC then installs the m-OH, ankD catalyzes the attachment of L-homoserine, and ankE ligates citrate to the ankD product to yield NK13650 B. The O-methyltransferase ankF is responsible for methylation of the C-17 phenol group of NK13650 B to produce NK13650 D. Amidation of NK13650 D with L-Asp by ankG then leads to the production of NK13650 C, whereas amidation of NK13650 B produces NK13650 A. This chain is Cystathionine gamma-synthase-like protein ankD, found in Aspergillus thermomutatus (Neosartorya pseudofischeri).